The following is a 114-amino-acid chain: uncharacterized protein (114 aa).

The active site involves cysteine 10.

Belongs to the ArsC family.

This is an uncharacterized protein from Haemophilus influenzae (strain ATCC 51907 / DSM 11121 / KW20 / Rd).